Reading from the N-terminus, the 263-residue chain is Glucosamine-6-phosphate deaminase (263 aa).

Asp-72 acts as the Proton acceptor; for enolization step in catalysis. Catalysis depends on Asp-141, which acts as the For ring-opening step. The active-site Proton acceptor; for ring-opening step is His-143. Catalysis depends on Glu-148, which acts as the For ring-opening step.

This sequence belongs to the glucosamine/galactosamine-6-phosphate isomerase family. NagB subfamily.

It catalyses the reaction alpha-D-glucosamine 6-phosphate + H2O = beta-D-fructose 6-phosphate + NH4(+). It functions in the pathway amino-sugar metabolism; N-acetylneuraminate degradation; D-fructose 6-phosphate from N-acetylneuraminate: step 5/5. With respect to regulation, allosterically activated by N-acetylglucosamine 6-phosphate (GlcNAc6P). Its function is as follows. Catalyzes the reversible isomerization-deamination of glucosamine 6-phosphate (GlcN6P) to form fructose 6-phosphate (Fru6P) and ammonium ion. The chain is Glucosamine-6-phosphate deaminase from Porphyromonas gingivalis (strain ATCC BAA-308 / W83).